We begin with the raw amino-acid sequence, 126 residues long: Holo-[acyl-carrier-protein] synthase (126 aa).

The Mg(2+) site is built by aspartate 9 and glutamate 58.

It belongs to the P-Pant transferase superfamily. AcpS family. It depends on Mg(2+) as a cofactor.

The protein resides in the cytoplasm. The catalysed reaction is apo-[ACP] + CoA = holo-[ACP] + adenosine 3',5'-bisphosphate + H(+). In terms of biological role, transfers the 4'-phosphopantetheine moiety from coenzyme A to a Ser of acyl-carrier-protein. In Yersinia pestis bv. Antiqua (strain Angola), this protein is Holo-[acyl-carrier-protein] synthase.